The following is an 833-amino-acid chain: Leucine--tRNA ligase (833 aa).

A 'HIGH' region motif is present at residues 41–52; that stretch reads PYPSGAGLHVGH. A 'KMSKS' region motif is present at residues 610 to 614; that stretch reads KMSKS. Lys613 contacts ATP.

This sequence belongs to the class-I aminoacyl-tRNA synthetase family.

Its subcellular location is the cytoplasm. The catalysed reaction is tRNA(Leu) + L-leucine + ATP = L-leucyl-tRNA(Leu) + AMP + diphosphate. In Streptococcus pyogenes serotype M4 (strain MGAS10750), this protein is Leucine--tRNA ligase.